The primary structure comprises 117 residues: Prefoldin subunit beta (117 aa).

The protein belongs to the prefoldin subunit beta family. As to quaternary structure, heterohexamer of two alpha and four beta subunits.

It localises to the cytoplasm. Functionally, molecular chaperone capable of stabilizing a range of proteins. Seems to fulfill an ATP-independent, HSP70-like function in archaeal de novo protein folding. The sequence is that of Prefoldin subunit beta from Methanosarcina mazei (strain ATCC BAA-159 / DSM 3647 / Goe1 / Go1 / JCM 11833 / OCM 88) (Methanosarcina frisia).